Reading from the N-terminus, the 471-residue chain is MTRVRVRGIYATALTQLLRNAGLDVVAASPPIRARFPDADLGAAEPHADIRMTPDRQGVGITAHGDDHARAVRAVVADLPRDTFVWPDPVPRGAVFDAAVDHTVGGGAILDLGDDREAYLPFGAVDDHVTDGDTLRVAIRDPAPPWHDDRPTATSTITVSGALASLDRGVDALVAGAATDRAELARATELLDPDIPDNWGVYWEYDGADASLDARGTALDTLAARADRLEATLADADGGDTPGLVAAPDTTLWAWFGRETRCALDDHRRTVAATMPGHHRIKAGSDAASDAVDFAEALGASVDEFPFGAVTDQFGPSVGASIEIQHGKPDGALISLGRGEVTDRSAENARITVEREMTGGGTYDALGVAREAGDTATTRFTEGNWWYPTVYRSEDGERKGTYLNVCTPVEVFPDAVRYVDLHVDVIKHADGAVEIVDREELQDCVADGLVSEELAEKALSVAERVQSAVAE.

The S1 motif domain maps to 93-139 (GAVFDAAVDHTVGGGAILDLGDDREAYLPFGAVDDHVTDGDTLRVAI).

This sequence belongs to the FAU-1 family.

Probable RNase involved in rRNA stability through maturation and/or degradation of precursor rRNAs. Binds to RNA in loop regions with AU-rich sequences. In Halobacterium salinarum (strain ATCC 29341 / DSM 671 / R1), this protein is Probable ribonuclease FAU-1.